The following is a 2057-amino-acid chain: Myosin heavy chain, non-muscle (2057 aa).

The 51-residue stretch at 78–128 (HRSVLVWVPHENQGFVAASIKREHGDEVEVELAETGKRVMILRDDIQKMNP) folds into the Myosin N-terminal SH3-like domain. In terms of domain architecture, Myosin motor spans 132–867 (DKVEDMAELT…VLAHLEEERD (736 aa)). ATP is bound at residue 225 to 232 (GESGAGKT). A 25 kDa/50 kDa junction region spans residues 250–260 (PKGSGAVPHPA). The interval 722 to 734 (DTQFGARTRKGMF) is 50 kDa/20 kDa junction. An actin-binding region spans residues 745–767 (LAKLMDTLRNTNPNFVRCIIPNH). The reactive sulfhydryl/actin-binding stretch occupies residues 782-798 (QLRCNGVLEGIRICRQG). In terms of domain architecture, IQ spans 870 to 899 (ISDLIVNFQAFCRGFLARRNYQKRLQQLNA). The stretch at 926–2016 (KPLLEVTKQE…SLKTKLRRTG (1091 aa)) forms a coiled coil. Disordered stretches follow at residues 1124–1144 (EERLHKDQQQRQESDRSKRKI), 1782–1802 (SSERARRAAETERDELAEEIA), and 2008–2057 (LKTK…DSAN). Residues 1343–2010 (SQIAELQVKL…MNREINSLKT (668 aa)) are alpha-helical tailpiece (LMM). The light meromyosin (LMM) stretch occupies residues 1343–2057 (SQIAELQVKL…ESLDGEDSAN (715 aa)). Residues 1782–1792 (SSERARRAAET) are compositionally biased toward basic and acidic residues. Positions 2011-2057 (KLRRTGGIGLSSSRLTGTPSSKRAGGGGGSDDSSVQDESLDGEDSAN) are globular tailpiece. 2 positions are modified to phosphoserine: Ser-2021 and Ser-2022. Residues 2044-2057 (SVQDESLDGEDSAN) are compositionally biased toward acidic residues.

This sequence belongs to the TRAFAC class myosin-kinesin ATPase superfamily. Myosin family. Interacts with sau. Interacts with ck and Ubr3. Post-translationally, ubiquitinated. In terms of tissue distribution, in Johnston's organ, expressed in neurons and scolopale cells.

The protein resides in the cell projection. It localises to the cilium. Its subcellular location is the cytoplasm. In terms of biological role, nonmuscle myosin appears to be responsible for cellularization. Required for morphogenesis and cytokinesis. Necessary for auditory transduction: plays a role in Johnston's organ organization by acting in scolopidial apical attachment. Interaction with the myosin ck may be important for this function. Localizes to and defines the trailing edge of cells during larval epidermal wound healing. This process is dependent on the phosphatidylinositol 4-phosphate 5-kinase sktl/skittles. This is Myosin heavy chain, non-muscle (zip) from Drosophila melanogaster (Fruit fly).